The sequence spans 213 residues: Triosephosphate isomerase (213 aa).

Residue 7-9 coordinates substrate; sequence NLK. His-88 serves as the catalytic Electrophile. Catalysis depends on Glu-136, which acts as the Proton acceptor. 2 residues coordinate substrate: Ile-141 and Gly-174.

This sequence belongs to the triosephosphate isomerase family. In terms of assembly, homotetramer; dimer of dimers.

It is found in the cytoplasm. The enzyme catalyses D-glyceraldehyde 3-phosphate = dihydroxyacetone phosphate. It functions in the pathway carbohydrate biosynthesis; gluconeogenesis. Its pathway is carbohydrate degradation; glycolysis; D-glyceraldehyde 3-phosphate from glycerone phosphate: step 1/1. In terms of biological role, involved in the gluconeogenesis. Catalyzes stereospecifically the conversion of dihydroxyacetone phosphate (DHAP) to D-glyceraldehyde-3-phosphate (G3P). The sequence is that of Triosephosphate isomerase from Thermoplasma volcanium (strain ATCC 51530 / DSM 4299 / JCM 9571 / NBRC 15438 / GSS1).